Here is a 267-residue protein sequence, read N- to C-terminus: MYLELVKKNSVILDKDGNKVKEVELPFIFSFPVRKDIIRRVFLAEFTHSLQPKGRDPMAGKRTSAESFGINLGMARVPRVKNSGEAALAPNTVGGRLTFPPSVDKKLVEEANDKEKQLAVISALSATADKVFVKARGHVFKDSVSFPIVVTDDIVSLKTASEVEEFLEKIGVYDDVKRVKERIRIRAGKGKMRGRKYKESIGPLIIVHDSNSPIVKAARNIAGVDVVNAKDVSVIHLAPGTHSGRLTIYTETSIKILDERLSKRLVS.

This sequence belongs to the universal ribosomal protein uL4 family. As to quaternary structure, part of the 50S ribosomal subunit.

Its function is as follows. One of the primary rRNA binding proteins, this protein initially binds near the 5'-end of the 23S rRNA. It is important during the early stages of 50S assembly. It makes multiple contacts with different domains of the 23S rRNA in the assembled 50S subunit and ribosome. Forms part of the polypeptide exit tunnel. This Saccharolobus islandicus (strain L.S.2.15 / Lassen #1) (Sulfolobus islandicus) protein is Large ribosomal subunit protein uL4.